Reading from the N-terminus, the 176-residue chain is Heme oxygenase HutZ (176 aa).

His170 lines the heme pocket.

The protein belongs to the heme oxygenase HugZ/HutZ family. Homodimer. Interacts with HutX, leading to the transfer of the heme from HutX to apo-HutZ.

The catalysed reaction is heme b + 3 AH2 + 3 O2 + 2 H(+) = biliverdin IXbeta + CO + Fe(2+) + 3 A + 3 H2O. The enzyme catalyses heme b + 3 AH2 + 3 O2 + 3 H(+) = biliverdin IXdelta + CO + Fe(2+) + 3 A + 3 H2O. Activity is pH-dependent. A proximal hydrogen bond between Asp-132 and the heme axial ligant His-170 is essential for heme degradation activity. Heme-degradation reaction is inhibited by iron chelators. In terms of biological role, involved in heme degradation. Catalyzes the degradation of heme to biliverdin, with the release of iron. Forms biliverdin beta and delta. Binds heme with high efficiency. The protein is Heme oxygenase HutZ of Vibrio cholerae serotype O1 (strain ATCC 39315 / El Tor Inaba N16961).